The chain runs to 113 residues: Protein USP2 (113 aa).

Residues 1-18 (MKITMFFAALSAASGVFA) form the signal peptide. A run of 6 repeats spans residues 32 to 37 (IGAGVG), 40 to 45 (IGAGVG), 46 to 49 (SYGY), 50 to 53 (PYGA), 59 to 65 (LQLLPLR), and 69 to 75 (LRRLPLR). Residues 32 to 45 (IGAGVGIGIGAGVG) form a 2 X 6 AA repeats region. The tract at residues 46-53 (SYGYPYGA) is 2 X 4 AA approximate tandem repeats. The tract at residues 59 to 75 (LQLLPLRWLPLRRLPLR) is 2 X 7 AA approximate repeats.

The protein localises to the secreted. This is Protein USP2 (USP2) from Puccinia graminis (Black stem rust fungus).